We begin with the raw amino-acid sequence, 562 residues long: Teichoic acid ribitol-phosphate polymerase TarL (562 aa).

It belongs to the CDP-glycerol glycerophosphotransferase family.

The protein localises to the cell membrane. It carries out the reaction 4-O-[di(2R)-glycerylphospho]-N-acetyl-beta-D-mannosaminyl-(1-&gt;4)-N-acetyl-alpha-D-glucosaminyl di-trans,octa-cis-undecaprenyl diphosphate + n CDP-L-ribitol = 4-O-[(D-ribitylphospho)(n)-di{(2R)-glycerylphospho}]-N-acetyl-beta-D-mannosaminyl-(1-&gt;4)-N-acetyl-alpha-D-glucosaminyl di-trans,octa-cis-undecaprenyl diphosphate + n CMP + n H(+). The protein operates within cell wall biogenesis; poly(ribitol phosphate) teichoic acid biosynthesis. Functionally, responsible for the polymerization of the main chain of the major teichoic acid by sequential transfer of ribitol phosphate units from CDP-ribitol to the second glycerol phosphate attached to the disaccharide linkage unit. Synthesizes polymers of more than 40 ribitol phosphate units in length. This chain is Teichoic acid ribitol-phosphate polymerase TarL (tarL), found in Staphylococcus aureus (strain NCTC 8325 / PS 47).